The primary structure comprises 523 residues: Cytochrome P450 monooxygenase ple1 (523 aa).

Residues A9–K29 form a helical membrane-spanning segment. Residue N141 is glycosylated (N-linked (GlcNAc...) asparagine). A heme-binding site is contributed by C444.

The protein belongs to the cytochrome P450 family. Heme is required as a cofactor.

It is found in the membrane. It participates in secondary metabolite biosynthesis; terpenoid biosynthesis. Functionally, cytochrome P450 monooxygenase; part of the gene cluster that mediates the biosynthesis of pleuromutilin, a tricyclic diterpene showing antibacterial properties. The geranylgeranyl diphosphate (GGPP) synthase ple4 catalyzes the first step in pleuromutilin biosynthesis. GGPP is then substrate of the premutilin synthase (PS) ple3 to yield premutilin. Premutilin synthase is a bifunctional enzyme composed of the fusion of a class II diterpene cyclase (DTC) and a class I diterpene synthase (DTS), with the corresponding domains and active sites containing characteristic aspartate-rich motifs. GGPP is first converted to mutildienyl-diphosphate (MPP) at the class II DTC site. MPP is subsequently further cyclized at the class I DTS site, followed by a 1,5-hydride shift and addition of water prior to terminating deprotonation, to yield premutilin. The cytochrome P450 monooxygenases ple5 and ple6 hydroxylate premutilin at C-11 and C-3, respectively, producing 11-hydroxypremutilin and 3-hydroxypremutilin. The combination of the actions of both ple5 and ple6 leads to the production of 3,11-dihydroxypremutilin. The short chain dehydrogenase ple7 further converts 3,11-dihydroxypremutilin into mutilin. The acetyltransferase ple2 then acetylates mutilin to produce 14-O-acetylmutilin. Finally, the cytochrome P450 monooxygenase ple1 catalyzes hydroxylation on the alpha position of the acetyl side chain of 14-O-acetylmutilin to yield pleuromutilin. This is Cytochrome P450 monooxygenase ple1 from Rhodocybe pseudopiperita (Clitopilus pseudopiperitus).